Reading from the N-terminus, the 899-residue chain is Androgen receptor (899 aa).

Residues 1-537 form a modulating region; it reads MEVQLGLGRV…PIDYYFPPQK (537 aa). Residues 1 to 566 are interaction with ZNF318; sequence MEVQLGLGRV…GSCKVFFKRA (566 aa). Disordered stretches follow at residues 35–146 and 175–222; these read QNPG…LSLL and QQQQ…LGGN. The residue at position 61 (S61) is a Phosphoserine; by CDK9. S75 carries the phosphoserine modification. Composition is skewed to low complexity over residues 94-103 and 175-193; these read QPSQQQAASE and QQQQ…QQQQ. Residues 210 to 222 show a composition bias toward polar residues; the sequence is APSSSKDSYLGGN. Y218 is subject to Phosphotyrosine; by CSK. Phosphoserine is present on S251. Y262 bears the Phosphotyrosine; by CSK and TNK2 mark. A phosphotyrosine; by CSK mark is found at Y302, Y341, Y352, and Y357. At Y358 the chain carries Phosphotyrosine; by CSK and TNK2. K381 participates in a covalent cross-link: Glycyl lysine isopeptide (Lys-Gly) (interchain with G-Cter in SUMO). A Phosphotyrosine; by CSK modification is found at Y388. Positions 436–471 are disordered; that stretch reads EGQLYGPGGGGGSSSPSDAGPVAPYGYTRPPQGLTS. Residue K500 forms a Glycyl lysine isopeptide (Lys-Gly) (interchain with G-Cter in SUMO) linkage. Y514 and Y531 each carry phosphotyrosine; by CSK. The tract at residues 531-898 is interaction with LPXN; it reads YYFPPQKTCL…GKVKPIYFHT (368 aa). The nuclear receptor DNA-binding region spans 538–611; it reads TCLICGDEAS…AGMTLGARKL (74 aa). 2 consecutive NR C4-type zinc fingers follow at residues 539 to 559 and 575 to 599; these read CLIC…CGSC and CASR…LRKC. Residues 551 to 641 form an interaction with HIPK3 region; that stretch reads YGALTCGSCK…TEDPSQKMTV (91 aa). An interaction with CCAR1 region spans residues 571 to 898; it reads QKYLCASRND…GKVKPIYFHT (328 aa). Residues 604 to 898 form an interaction with KAT7 region; sequence MTLGARKLKK…GKVKPIYFHT (295 aa). Position 630 is a phosphoserine (S630). The 232-residue stretch at 648–879 folds into the NR LBD domain; that stretch reads ECQPIFLNVL…DFPEMMAEII (232 aa). Residues N685 and R732 each coordinate 17beta-hydroxy-5alpha-androstan-3-one. Glycyl lysine isopeptide (Lys-Gly) (interchain with G-Cter in ubiquitin) cross-links involve residues K825 and K827. Residue T857 coordinates 17beta-hydroxy-5alpha-androstan-3-one. At Y895 the chain carries Phosphotyrosine; by CSK.

Belongs to the nuclear hormone receptor family. NR3 subfamily. As to quaternary structure, binds DNA as a homodimer. Part of a ternary complex containing AR, EFCAB6/DJBP and PARK7. Interacts with HIPK3 and NR0B2 in the presence of androgen. The ligand binding domain interacts with KAT7/HBO1 in the presence of dihydrotestosterone. Interacts with EFCAB6/DJBP, PQBP1, RANBP9, SPDEF, SRA1, TGFB1I1, ZNF318 and RREB1. The AR N-terminal poly-Gln region binds Ran resulting in enhancement of AR-mediated transactivation. Ran-binding decreases as the poly-Gln length increases. Interacts with ZMIZ1/ZIMP10 and ZMIZ2/ZMIP7 which both enhance its transactivation activity. Interacts with RBAK. Interacts via the ligand-binding domain with LXXLL and FXXLF motifs from NCOA1, NCOA2, NCOA3 and MAGEA11. Interacts (via nuclear receptor DNA binding domain and nuclear receptor ligand binding domain) with NCOA4. Interacts with HIP1 (via coiled coil domain). Interacts with SLC30A9 and RAD54L2/ARIP4. Interacts with MACROD1 (via macro domain). Interacts (via ligand-binding domain) with TRIM68. Interacts with TNK2. Interacts with USP26. Interacts with RNF6. Interacts (regulated by RNF6 probably through polyubiquitination) with RNF14; regulates AR transcriptional activity. Interacts with PRMT2 and TRIM24. Interacts with RACK1. Interacts with RANBP10; this interaction enhances hormone-induced AR transcriptional activity. Interacts with PRPF6 in a hormone-independent way; this interaction enhances hormone-induced AR transcriptional activity. Interacts with STK4/MST1. Interacts with ZIPK/DAPK3. Interacts with LPXN. Interacts with MAK. Part of a complex containing AR, MAK and NCOA3. Interacts with CRY1. Interacts with CCAR1 and GATA2. Interacts with BUD31. Interacts with ARID4A. Interacts with ARID4B. Interacts (via NR LBD domain) with ZBTB7A; the interaction is direct and androgen-dependent. Interacts with NCOR1. Interacts with NCOR2. Interacts with CRY2 in a ligand-dependent manner. Post-translationally, phosphorylated in prostate cancer cells in response to several growth factors including EGF. Phosphorylation is induced by c-Src kinase (CSK). Tyr-514 is one of the major phosphorylation sites and an increase in phosphorylation and Src kinase activity is associated with prostate cancer progression. Phosphorylation by TNK2 enhances the DNA-binding and transcriptional activity. Phosphorylation at Ser-61 by CDK9 regulates AR promoter selectivity and cell growth. Phosphorylation by PAK6 leads to AR-mediated transcription inhibition. Sumoylated on Lys-381 (major) and Lys-500. Ubiquitinated. Deubiquitinated by USP26. 'Lys-6' and 'Lys-27'-linked polyubiquitination by RNF6 modulates AR transcriptional activity and specificity. In terms of processing, palmitoylated by ZDHHC7 and ZDHHC21. Palmitoylation is required for plasma membrane targeting and for rapid intracellular signaling via ERK and AKT kinases and cAMP generation.

The protein resides in the nucleus. It localises to the cytoplasm. Its function is as follows. Steroid hormone receptors are ligand-activated transcription factors that regulate eukaryotic gene expression and affect cellular proliferation and differentiation in target tissues. Transcription factor activity is modulated by bound coactivator and corepressor proteins like ZBTB7A that recruits NCOR1 and NCOR2 to the androgen response elements/ARE on target genes, negatively regulating androgen receptor signaling and androgen-induced cell proliferation. Transcription activation is also down-regulated by NR0B2. Activated, but not phosphorylated, by HIPK3 and ZIPK/DAPK3. In Mus musculus (Mouse), this protein is Androgen receptor (Ar).